The chain runs to 93 residues: Sec-independent protein translocase protein TatA (93 aa).

The helical transmembrane segment at 1–21 (MGNVFSGWHLLVILLVIVLLF) threads the bilayer. The segment at 49–93 (DITRSQDGHPDSQGNFAESASSVPFVKSEKQSEKRASVTEAKKSK) is disordered. Residues 60–70 (SQGNFAESASS) show a composition bias toward polar residues. Residues 75-93 (KSEKQSEKRASVTEAKKSK) are compositionally biased toward basic and acidic residues.

It belongs to the TatA/E family. As to quaternary structure, the Tat system comprises two distinct complexes: a TatABC complex, containing multiple copies of TatA, TatB and TatC subunits, and a separate TatA complex, containing only TatA subunits. Substrates initially bind to the TatABC complex, which probably triggers association of the separate TatA complex to form the active translocon.

The protein resides in the cell membrane. Functionally, part of the twin-arginine translocation (Tat) system that transports large folded proteins containing a characteristic twin-arginine motif in their signal peptide across membranes. TatA could form the protein-conducting channel of the Tat system. This Tropheryma whipplei (strain TW08/27) (Whipple's bacillus) protein is Sec-independent protein translocase protein TatA.